A 49-amino-acid polypeptide reads, in one-letter code: Sperm protamine P1 (49 aa).

The segment at 1-49 is disordered; that stretch reads MARYRCCRSHSRSRCRRRRRRSRRRRRRSCGRRRRAGYRRYTVRYRRRR.

This sequence belongs to the protamine P1 family. Testis.

The protein localises to the nucleus. It localises to the chromosome. In terms of biological role, protamines substitute for histones in the chromatin of sperm during the haploid phase of spermatogenesis. They compact sperm DNA into a highly condensed, stable and inactive complex. The protein is Sperm protamine P1 (PRM1) of Macronycteris commersonii (Commerson's roundleaf bat).